The primary structure comprises 57 residues: Small polypeptide DEVIL 20 (57 aa).

N-linked (GlcNAc...) asparagine glycosylation is present at asparagine 5. The segment at 16–47 is required for DVL/RTFL small polypeptide activity; it reads TFKAKCSHMVRKQRAKFYILGRCLAMLVCGRG. A helical membrane pass occupies residues 29–45; it reads RAKFYILGRCLAMLVCG.

Belongs to the DVL/RTFL small polypeptides family.

It localises to the cell membrane. Its function is as follows. Small polypeptide acting as a regulatory molecule which coordinates cellular responses required for differentiation, growth and development, probably by restricting polar cell proliferation in lateral organs and coordinating socket cell recruitment and differentiation at trichome sites. This chain is Small polypeptide DEVIL 20, found in Arabidopsis thaliana (Mouse-ear cress).